A 500-amino-acid polypeptide reads, in one-letter code: Putative beta-lactamase-like 1 (500 aa).

This sequence belongs to the beta-lactamase family.

This Homo sapiens (Human) protein is Putative beta-lactamase-like 1 (LACTBL1).